Here is an 867-residue protein sequence, read N- to C-terminus: MSGNTHGLSWFPHFPDKFVSWGQEIHLYEVRRKDDHSQKSRLPYISVNYLANESRYQYARCVAASYHSDQPIIAVGLADGKVGICNFRDTYDSSWEYTPRQQRMCTCLAWNELDANILAIGHDRHRNDTCITIWDIERGVPKETANFFGVGESANSICWDRNHRTVIAGMSQKMIKLFDLRQSNATCQSIQTKTVQGLSVSPNGNYLCSYVDSVITLWDPRNIKSPLRQIQSSKNHLQIAWCPTRTSLLSSLQRDSSYITLYDIRSVDTDNSGEIYHVKRQISPFPARYQHSGKFSFVNCLSWHSRDFERALLLADALNILDFRLPATLHTAHSNRRKLPLLMQRPLYTPASPTSTAATPTQQQPTSSCSTNSGSSLDFSTPGGSPFNVDLLKPELFELDLVDETRQRALEDYGIKPDNKRFGELHLTPYLRNVWSTLNNVYSEDRLTGLKATLGINLGHTSEALMASSRIESQVLQWPEGINNSNKLICYRSEQRDLALQLCGWAFEQELDRFIDQLYANKEYSRAAMICVFHLKIFHACNILSSAADNMRDPSMYRITVIALSSFNADRCSSTWRNQRSSANMQIHDPHLRAVFSFLTMEKDNFDAVLKEEGVSLSDRMAFACKYLSETKLADYVAQQIQAAIDGGDLNGLLLTGESQDGIDILQSYMDTSFDVQTVALVAINYFRQELFEDKRIQYWIASYLDHLNSWGLWEKRAELDIKIESIRPSSRSSRTVFLSCNFCGKSVSNALLDEPRPRSTTTSTNRLSSCPSCRKPLPRCSLCLMHMGTMVNMSNGETPTTTPDVPGWQTKPFSKWFSWCQTCRHGGHTEHIMQWFKQNSECPVSSCNCRCFDMDGTKPNTLRDIS.

WD repeat units lie at residues 51–86, 100–144, 149–188, 190–228, and 231–272; these read ANES…GICN, RQQR…PKET, GVGE…ATCQ, IQTK…SPLR, and QSSK…TDNS. Residues 350–376 are compositionally biased toward low complexity; the sequence is PASPTSTAATPTQQQPTSSCSTNSGSS. The disordered stretch occupies residues 350–378; the sequence is PASPTSTAATPTQQQPTSSCSTNSGSSLD. The C4-type zinc finger occupies 739 to 777; sequence LSCNFCGKSVSNALLDEPRPRSTTTSTNRLSSCPSCRKP. The Zn(2+) site is built by cysteine 741, cysteine 744, cysteine 771, cysteine 774, cysteine 784, cysteine 821, cysteine 824, histidine 826, histidine 829, histidine 832, cysteine 843, cysteine 848, and cysteine 852. Residues 778-857 form an RING-type; atypical zinc finger; the sequence is LPRCSLCLMH…CNCRCFDMDG (80 aa).

It belongs to the WD repeat mio family. In terms of assembly, component of the GATOR complex consisting of mio, Nup44A/Seh1, Im11, Nplr3, Nplr2, Wdr24, Wdr59 and Sec13. Within the GATOR complex, probable component of the GATOR2 subcomplex which is likely composed of mio, Nup44A/Seh1, Wdr24, Wdr59 and Sec13. Interacts with Wdr24. Interacts with nucleoporin Nup44A/Seh1. The GATOR2 complex associates with unmet in the absence of S-adenosyl-L-methionine; the mio-Wdr24-Nup44A subcomplex is essential and sufficient for this interaction while Wdr59 and Sec13 are dispensable. This association acts as a nutrient sensor to inhibit mTORC1 signaling in the absence of methionine. In terms of tissue distribution, present in the oocyte.

Its subcellular location is the nucleus. The protein resides in the lysosome. In terms of biological role, an essential component of the GATOR subcomplex GATOR2 which functions as an activator of the amino acid-sensing branch of the mTORC1 signaling pathway. The two GATOR subcomplexes, GATOR1 and GATOR2, regulate the mTORC1 pathway in order to mediate metabolic homeostasis, female gametogenesis and the response to amino acid limitation and complete starvation. GATOR2 activates the mTORC1 signaling pathway through the inhibition of the GATOR1 subcomplex, controlling the switch to cell proliferation and growth under nutrient replete conditions and during female oocyte development. This component is required for activating mTORC1 specifically in germline cells to promote cell growth and maintain the oocyte fate. GATOR1 and GATOR2 act at different stages of oogenesis to regulate mTORC1 in order to control meiotic entry and promote oocyte growth and development. After exactly four mitotic cyst divisions, the GATOR1 complex members (Iml1, Nprl2 and Nprl3) down-regulate mTORC1 to slow cellular metabolism and promote the mitotic/meiotic transition. At later stages of oogenesis, the mio and Nup44A components of the GATOR2 complex inhibit GATOR1 and thus activate mTORC1 to promote meiotic progression, and drive oocyte growth and development. In addition to its role in the regulation of the mTORC1 complex, functions independently of mTORC1 to prevent the inappropriate accumulation of autolysosomes in germline tissues. The protein is GATOR2 complex protein Mio of Drosophila melanogaster (Fruit fly).